The chain runs to 110 residues: RNA polymerase II transcriptional coactivator (110 aa).

Positions 1–50 (MPKTKKKDSSSDSDSGPDDRIKPASKKAKESDAPNSDPKDSGENGATSWT) are disordered. Residues 17 to 42 (PDDRIKPASKKAKESDAPNSDPKDSG) show a composition bias toward basic and acidic residues.

The protein belongs to the transcriptional coactivator PC4 family.

Its subcellular location is the nucleus. In terms of biological role, general coactivator that functions cooperatively with TAFs and mediates functional interactions between upstream activators and the general transcriptional machinery. Binds single-stranded DNA. Binds specifically to the NssBF element, a short nucleotide sequence of the 1731 retrotransposon, to repress promoter activity. This is RNA polymerase II transcriptional coactivator (Ssb-c31a) from Drosophila melanogaster (Fruit fly).